The chain runs to 339 residues: Ketol-acid reductoisomerase (NADP(+)) (339 aa).

Positions 1-182 (MRVYYDRDAD…GGGRSGVIET (182 aa)) constitute a KARI N-terminal Rossmann domain. Residues 24–27 (YGSQ), arginine 48, serine 51, threonine 53, and 83–86 (DELQ) contribute to the NADP(+) site. The active site involves histidine 108. Glycine 134 serves as a coordination point for NADP(+). Positions 183-328 (TFKEECETDL…GKLRAMMPWI (146 aa)) constitute a KARI C-terminal knotted domain. Residues aspartate 191, glutamate 195, glutamate 227, and glutamate 231 each coordinate Mg(2+). A substrate-binding site is contributed by serine 252.

The protein belongs to the ketol-acid reductoisomerase family. Requires Mg(2+) as cofactor.

It carries out the reaction (2R)-2,3-dihydroxy-3-methylbutanoate + NADP(+) = (2S)-2-acetolactate + NADPH + H(+). The enzyme catalyses (2R,3R)-2,3-dihydroxy-3-methylpentanoate + NADP(+) = (S)-2-ethyl-2-hydroxy-3-oxobutanoate + NADPH + H(+). It functions in the pathway amino-acid biosynthesis; L-isoleucine biosynthesis; L-isoleucine from 2-oxobutanoate: step 2/4. Its pathway is amino-acid biosynthesis; L-valine biosynthesis; L-valine from pyruvate: step 2/4. Functionally, involved in the biosynthesis of branched-chain amino acids (BCAA). Catalyzes an alkyl-migration followed by a ketol-acid reduction of (S)-2-acetolactate (S2AL) to yield (R)-2,3-dihydroxy-isovalerate. In the isomerase reaction, S2AL is rearranged via a Mg-dependent methyl migration to produce 3-hydroxy-3-methyl-2-ketobutyrate (HMKB). In the reductase reaction, this 2-ketoacid undergoes a metal-dependent reduction by NADPH to yield (R)-2,3-dihydroxy-isovalerate. The protein is Ketol-acid reductoisomerase (NADP(+)) of Brucella melitensis biotype 2 (strain ATCC 23457).